We begin with the raw amino-acid sequence, 122 residues long: Large ribosomal subunit protein uL14 (122 aa).

This sequence belongs to the universal ribosomal protein uL14 family. Part of the 50S ribosomal subunit. Forms a cluster with proteins L3 and L19. In the 70S ribosome, L14 and L19 interact and together make contacts with the 16S rRNA in bridges B5 and B8.

Its function is as follows. Binds to 23S rRNA. Forms part of two intersubunit bridges in the 70S ribosome. This chain is Large ribosomal subunit protein uL14, found in Rhodospirillum rubrum (strain ATCC 11170 / ATH 1.1.1 / DSM 467 / LMG 4362 / NCIMB 8255 / S1).